The following is a 643-amino-acid chain: NAD-dependent malic enzyme, mitochondrial (643 aa).

Residues 1–38 constitute a mitochondrion transit peptide; it reads PRVRSFIAHQSGITSVIRRSPDIAHRMVRSLSVSSQRN. Fumarate is bound by residues Gln-116, Arg-119, and Arg-143. The active-site Proton donor is the Tyr-164. Arg-219 contacts (S)-malate. Arg-219 lines the NAD(+) pocket. Lys-237 functions as the Proton acceptor in the catalytic mechanism. Residues Glu-309 and Asp-310 each contribute to the a divalent metal cation site. The NAD(+) site is built by Asn-313, Asp-333, Ala-366, Ala-369, and Asn-472. Asp-333 provides a ligand contact to a divalent metal cation. Positions 472 and 516 each coordinate (S)-malate.

Belongs to the malic enzymes family. Homotetramer. It depends on Mg(2+) as a cofactor. Requires Mn(2+) as cofactor.

It is found in the mitochondrion matrix. The enzyme catalyses (S)-malate + NAD(+) = pyruvate + CO2 + NADH. It carries out the reaction oxaloacetate + H(+) = pyruvate + CO2. With respect to regulation, subject to allosteric activation by fumarate. In terms of biological role, NAD-dependent mitochondrial malic enzyme that catalyzes the oxidative decarboxylation of malate to pyruvate. This Ascaris suum (Pig roundworm) protein is NAD-dependent malic enzyme, mitochondrial.